The sequence spans 359 residues: uncharacterized protein (359 aa).

46–53 (GPKSSGKS) contributes to the ATP binding site.

The protein belongs to the archaeal ATPase family.

This is an uncharacterized protein from Methanocaldococcus jannaschii (strain ATCC 43067 / DSM 2661 / JAL-1 / JCM 10045 / NBRC 100440) (Methanococcus jannaschii).